Here is a 435-residue protein sequence, read N- to C-terminus: Cell adhesion molecule 2 (435 aa).

The first 24 residues, 1-24 (MIWKRSAVLRFYSVCGLLLQGSQG), serve as a signal peptide directing secretion. Topologically, residues 25-367 (QFPLTQNVTV…ALAGQNGPDH (343 aa)) are extracellular. An Ig-like V-type domain is found at 27-119 (PLTQNVTVVE…PVKTSKAYLT (93 aa)). Residues Asn31 and Asn51 are each glycosylated (N-linked (GlcNAc...) asparagine). 3 cysteine pairs are disulfide-bonded: Cys44/Cys104, Cys146/Cys203, and Cys248/Cys296. 2 consecutive Ig-like C2-type domains span residues 127–219 (PQIS…VAMQ) and 227–312 (PSVK…YVLI). Asn291 is a glycosylation site (N-linked (GlcNAc...) asparagine). Residues 368–388 (ALIGGIVAVVVFVTLCSIFLL) traverse the membrane as a helical segment. The Cytoplasmic segment spans residues 389-435 (GRYLARHKGTYLTNEAKGAEDAPDADTAIINAEGSQVNAEEKKEYFI). Ser423 carries the phosphoserine modification.

Belongs to the nectin family.

Its subcellular location is the cell membrane. The protein localises to the synapse. It localises to the cell projection. The protein resides in the axon. Adhesion molecule that engages in homo- and heterophilic interactions with the other nectin-like family members, leading to cell aggregation. Important for synapse organization, providing regulated trans-synaptic adhesion. Preferentially binds to oligodendrocytes. Functionally, (Microbial infection) Induces cell fusion in neuron infected by a neuropathogenic strain of measles. Interacts with measles hemagglutinin to trigger hyperfusogenic F-mediated membrane fusion and presumably transsynaptic cell-to-cell transmission of the virus. This Homo sapiens (Human) protein is Cell adhesion molecule 2 (CADM2).